A 506-amino-acid chain; its full sequence is Aminoaldehyde dehydrogenase 1b (506 aa).

Aspartate 102 is a binding site for Na(+). NAD(+)-binding positions include 162–164 (TPW) and 188–191 (KPSE). Leucine 192 provides a ligand contact to Na(+). NAD(+) is bound by residues 242–245 (SFET) and glutamate 263. Catalysis depends on glutamate 263, which acts as the Proton acceptor. Cysteine 297 functions as the Nucleophile in the catalytic mechanism. Glutamate 396 and tryptophan 462 together coordinate NAD(+).

The protein belongs to the aldehyde dehydrogenase family.

It catalyses the reaction 4-aminobutanal + NAD(+) + H2O = 4-aminobutanoate + NADH + 2 H(+). The catalysed reaction is 3-aminopropanal + NAD(+) + H2O = beta-alanine + NADH + 2 H(+). It carries out the reaction 4-(trimethylamino)butanal + NAD(+) + H2O = 4-(trimethylamino)butanoate + NADH + 2 H(+). The enzyme catalyses 4-guanidinobutanal + NAD(+) + H2O = 4-guanidinobutanoate + NADH + 2 H(+). It catalyses the reaction betaine aldehyde + NAD(+) + H2O = glycine betaine + NADH + 2 H(+). The protein operates within amine and polyamine biosynthesis; betaine biosynthesis via choline pathway; betaine from betaine aldehyde: step 1/1. In terms of biological role, dehydrogenase that catalyzes the oxidation of several aminoaldehydes. Metabolizes and detoxifies aldehyde products of polyamine degradation to non-toxic amino acids. Catalyzes the oxidation of 4-aminobutanal and 3-aminopropanal to 4-aminobutanoate and beta-alanine, respectively. Catalyzes the oxidation of 4-(trimethylamino)butanal and 4-guanidinobutanal to 4-trimethylammoniobutanoate and 4-guanidinobutanoate, respectively. Catalyzes the oxidation of betaine aldehyde to glycine betaine. The chain is Aminoaldehyde dehydrogenase 1b from Zea mays (Maize).